The chain runs to 98 residues: MSLIHMNIIMAFTLSLVGLLMYRSHLMSALLCMEGMMLSLFILATLTALNLHFTLANMMPIILLVFAACEAAIGLALLVKISNTYGTDYVQNLNLLQC.

3 helical membrane passes run 1 to 21 (MSLI…GLLM), 29 to 49 (ALLC…LTAL), and 59 to 79 (MPII…ALLV).

It belongs to the complex I subunit 4L family. Core subunit of respiratory chain NADH dehydrogenase (Complex I) which is composed of 45 different subunits.

The protein resides in the mitochondrion inner membrane. It carries out the reaction a ubiquinone + NADH + 5 H(+)(in) = a ubiquinol + NAD(+) + 4 H(+)(out). In terms of biological role, core subunit of the mitochondrial membrane respiratory chain NADH dehydrogenase (Complex I) which catalyzes electron transfer from NADH through the respiratory chain, using ubiquinone as an electron acceptor. Part of the enzyme membrane arm which is embedded in the lipid bilayer and involved in proton translocation. The sequence is that of NADH-ubiquinone oxidoreductase chain 4L (MT-ND4L) from Hyperoodon ampullatus (Northern bottlenose whale).